We begin with the raw amino-acid sequence, 240 residues long: Pro-opiomelanocortin B (240 aa).

An N-terminal signal peptide occupies residues 1 to 36 (MFGTFLQNQSVRLNMVCAPWLLAVVVVCVCNPGVEG). Gln-37 bears the Pyrrolidone carboxylic acid mark. His-111 is a propeptide. Ser-112 is subject to N-acetylserine; in Corticotropin. Position 124 is an isoleucine amide (Ile-124).

This sequence belongs to the POMC family. In terms of processing, specific enzymatic cleavages at paired basic residues yield the different active peptides. Acetylation of beta-endorphin occurs in a tissue-specific manner. In terms of tissue distribution, pituitary and hypothalamus of adult diploid animals.

The protein localises to the secreted. Its function is as follows. Stimulates the adrenal glands to release cortisol. Melanocyte-stimulating hormone alpha: Anorexigenic peptide. Increases the pigmentation of skin by increasing melanin production in melanocytes. Functionally, melanocyte-stimulating hormone beta: Increases the pigmentation of skin by increasing melanin production in melanocytes. In terms of biological role, beta-endorphin: Endogenous orexigenic opiate. Its function is as follows. Endogenous opiate. The sequence is that of Pro-opiomelanocortin B (pomcb) from Oncorhynchus mykiss (Rainbow trout).